The sequence spans 166 residues: MMKFMCLFVCAIAAVSASDYGNVGYGRVPVGGLAYQVQPALTVSSIVPVGGYGGGYGGGRGYGRGYGRSVEVPVAAVWTPNSRYGVAPVDRQALGLAKLSLAAPGAGGPLVLNEPRRIIKVSGYGPQRGYKQPLGYGSIEQAQGASAAAASSSVAGQNKGYQNGGY.

Residues 1-17 (MMKFMCLFVCAIAAVSA) form the signal peptide.

It belongs to the chorion protein S15/S18 family.

The protein resides in the secreted. Its function is as follows. Chorion membrane (egg shell) protein; plays a role in protecting the egg from the environment. This is Chorion protein S18 (Cp18) from Drosophila grimshawi (Hawaiian fruit fly).